Consider the following 66-residue polypeptide: Large ribosomal subunit protein bL35 (66 aa).

It belongs to the bacterial ribosomal protein bL35 family.

In Methylobacterium nodulans (strain LMG 21967 / CNCM I-2342 / ORS 2060), this protein is Large ribosomal subunit protein bL35.